A 5478-amino-acid chain; its full sequence is Mucin-12 (5478 aa).

The first 16 residues, 1–16, serve as a signal peptide directing secretion; sequence MLVIWILTLALRLCAS. Residues 17–5380 lie on the Extracellular side of the membrane; sequence VTTVTPEGSA…EFNIAKSLVY (5364 aa). Residues N154, N170, and N176 are each glycosylated (N-linked (GlcNAc...) asparagine). The segment at 212–737 is disordered; sequence LDSSTNSGHS…GSTETTLLPD (526 aa). Residues 222–240 form repeat 1; the sequence is EESTVSHSGPGATGTTLFP. Residues 222–4761 form a 28 X 19 AA approximate tandem repeats of E-E-S-X-X-X-H-X-X-P-X-X-T-X-T-X-X-X-P region; it reads EESTVSHSGP…PGSTQTMHFP (4540 aa). 4 stretches are compositionally biased toward polar residues: residues 226–246, 255–288, 296–313, and 325–342; these read VSHS…SATS, SPIT…SSPR, PART…TSHS, and DSTT…SHSI. Residues 343 to 366 show a composition bias toward low complexity; sequence PGSTDTTLSPGTTTPSSLGPESTT. Residues 367–387 are compositionally biased toward polar residues; the sequence is FHSSPGYTKTTRLPDNTTTSG. An N-linked (GlcNAc...) asparagine glycan is attached at N382. The segment covering 396 to 413 has biased composition (low complexity); sequence HSSTGSPHTTLSPSSSTT. The span at 419–440 shows a compositional bias: polar residues; that stretch reads TTFQSWPSSKDTSPAPSGTTSA. Low complexity-rich tracts occupy residues 445–466 and 478–495; these read STTY…SSTT and SSPV…SATS. A run of 2 repeats spans residues 471–489 and 499–517. Residues 531–554 show a composition bias toward low complexity; the sequence is TFHGSTTHTKSSTPSTTAALAHTS. Polar residues-rich tracts occupy residues 555–575 and 608–648; these read YHSS…TISG and STPS…SPDT. The span at 654-669 shows a compositional bias: low complexity; sequence SMTSSGVSEESTTSHS. Copy 4 of the repeat occupies 662 to 680; that stretch reads EESTTSHSRPGSTHTTAFP. Polar residues-rich tracts occupy residues 670–715 and 722–737; these read RPGS…TASS and TFHS…LLPD. N-linked (GlcNAc...) asparagine glycosylation is present at N738. Disordered regions lie at residues 749-4847, 4887-5034, 5048-5071, and 5093-5112; these read MPVH…HFTT, SSRS…THTV, STAF…TASD, and ASSS…TSPS. 2 stretches are compositionally biased toward polar residues: residues 751 to 783 and 792 to 842; these read VHSS…WPSS and TTTS…TQTM. Copy 5 of the repeat occupies 827 to 845; that stretch reads EESTTYHSSPGSTQTMHFP. The span at 859 to 877 shows a compositional bias: low complexity; that stretch reads TSHSSTTHTISSAPSTTSA. 2 stretches are compositionally biased toward polar residues: residues 884-899 and 928-970; these read SYHS…HFPD and RSTT…TTFH. Residues 971–1007 show a composition bias toward low complexity; sequence SSPRSPATTLSPASTTSSGVSEESTTSRSRPGSTHTT. The segment covering 1009–1021 has biased composition (polar residues); that stretch reads FPDSTTTPGLSRH. Positions 1022-1065 are enriched in low complexity; the sequence is STTSHSSPGSTDTTLLPASTTTSGPSQESTTSHSSSGSTDTALS. 2 stretches are compositionally biased toward polar residues: residues 1066-1101 and 1108-1138; these read PGST…TSSG and RVHS…TAFQ. Residues 1139 to 1157 show a composition bias toward low complexity; it reads THPASTHTTPSPPSTATAP. Residues 1159-1177 form repeat 6; that stretch reads EESTTYHRSPGSTPTTHFP. 2 stretches are compositionally biased toward polar residues: residues 1160–1184 and 1191–1207; these read ESTT…TTSG and IFHS…SSAH. Composition is skewed to low complexity over residues 1208 to 1220, 1229 to 1241, and 1249 to 1262; these read STTS…TTSR, TTLP…PGLS, and SSPR…SPAS. Composition is skewed to polar residues over residues 1271–1324, 1331–1357, and 1364–1377; these read ESTT…TTSV, TFHS…TEES, and PAST…TLTT. Low complexity-rich tracts occupy residues 1384-1396 and 1411-1438; these read STTF…STGT and ESTP…SLSE. Positions 1439-1448 are enriched in polar residues; sequence KSTTFYTSPR. Residues 1458–1481 show a composition bias toward low complexity; the sequence is TTTSSGVSEESSTSHSQPGSTHTT. Residues 1466–1484 form repeat 7; that stretch reads EESSTSHSQPGSTHTTAFP. Residues 1483 to 1537 are compositionally biased toward polar residues; sequence FPDSTTTSDLSQEPTTSHSSQGSTEATLSPGSTTASSLGQQSTTFHSSPGDTETT. Over residues 1552–1568 the composition is skewed to low complexity; the sequence is STPTHSSTGSLHTTLTP. 2 stretches are compositionally biased toward polar residues: residues 1569-1586 and 1606-1630; these read ASST…FQSW and VSTT…TTLG. Residues 1633–1651 form repeat 8; that stretch reads EESTTVHSSPGATGTALFP. The span at 1653 to 1708 shows a compositional bias: polar residues; sequence RSATSVLVGEPTTSPISSGSTETTALPGSTTTAGLSEKSTTFYSSPRSPDTTLSPA. The span at 1709–1724 shows a compositional bias: low complexity; that stretch reads STTSSGVSEESTTSHS. Repeat unit 9 spans residues 1717–1735; that stretch reads EESTTSHSRPGSTHTTAFP. 2 stretches are compositionally biased toward polar residues: residues 1725 to 1797 and 1805 to 1840; these read RPGS…TTAS and PVHS…SSKD. N1793 is a glycosylation site (N-linked (GlcNAc...) asparagine). Low complexity-rich tracts occupy residues 1856-1877 and 1889-1906; these read STTS…SSTT and SSPV…STTS. A run of 2 repeats spans residues 1882–1900 and 1910–1928. Polar residues predominate over residues 1914–1935; sequence AYHSSPGSTQTMHFPESSTASG. Positions 1943 to 1959 are enriched in low complexity; sequence SHSSTTHTISSPPSTTS. Composition is skewed to polar residues over residues 1967–1982 and 2011–2053; these read SYHS…HFPD and RSTT…TTFH. Positions 2054–2082 are enriched in low complexity; it reads SSPRSPATTLSPASTTSSGVSEESTTSHS. Repeat 12 spans residues 2075–2093; it reads EESTTSHSRPGSTHTTAFP. A compositionally biased stretch (polar residues) spans 2083 to 2104; that stretch reads RPGSTHTTAFPDSTTTPGLSRH. Low complexity predominate over residues 2105–2130; sequence STTSHSSPGSTDTTLLPASTTTSGPS. Polar residues-rich tracts occupy residues 2131-2184 and 2191-2221; these read QEST…TSSG and RVHS…TAFQ. The span at 2222–2240 shows a compositional bias: low complexity; it reads THPASTHTTPSPPSTATAP. The stretch at 2242–2260 is repeat 13; sequence EESTTYHRSPGSTPTTHFP. Polar residues-rich tracts occupy residues 2243 to 2267 and 2274 to 2290; these read ESTT…TTSG and IFHS…SSAH. Low complexity-rich tracts occupy residues 2291-2303, 2312-2324, and 2332-2345; these read STTS…TTSR, TTLP…PGLS, and SSPR…SPAS. Positions 2354–2392 are enriched in polar residues; sequence ESTTSRSQPGSTHSTVSPASTTTPGLSEESTTVYSSSPG. The span at 2393 to 2407 shows a compositional bias: low complexity; sequence STETTVFPRTPTTSV. Composition is skewed to polar residues over residues 2414 to 2440 and 2447 to 2460; these read TFHS…TEES and PAST…TLTT. 2 stretches are compositionally biased toward low complexity: residues 2467–2483 and 2494–2521; these read STTF…TLSP and ESTP…SLSE. The span at 2522–2531 shows a compositional bias: polar residues; the sequence is KSTTFYTSPR. Residues 2541 to 2564 are compositionally biased toward low complexity; sequence TTTSSGVSEESSTSHSQPGSTHTT. Residues 2549 to 2567 form repeat 14; the sequence is EESSTSHSQPGSTHTTAFP. Polar residues predominate over residues 2566–2578; it reads FPDSTTTPGLSRH. The span at 2579–2604 shows a compositional bias: low complexity; that stretch reads STTSHSSPGSTDTTLLPASTTTSGPS. Polar residues-rich tracts occupy residues 2605 to 2658 and 2665 to 2695; these read QEST…TSSG and RVHS…TTFQ. Low complexity predominate over residues 2696 to 2714; that stretch reads THPASTHTTPSPPSTATAP. Repeat unit 15 spans residues 2716-2734; that stretch reads EESTTYHRSPGSTPTTHFP. Polar residues-rich tracts occupy residues 2717–2741 and 2748–2764; these read ESTT…TTSG and IFHS…SSAH. 3 stretches are compositionally biased toward low complexity: residues 2765–2777, 2786–2798, and 2806–2819; these read STTS…TTSR, TTLP…PGLS, and SSPR…SPAS. 3 stretches are compositionally biased toward polar residues: residues 2828 to 2881, 2888 to 2914, and 2921 to 2934; these read ESTT…TTSV, TFHS…TEES, and PAST…TLTT. 2 stretches are compositionally biased toward low complexity: residues 2941-2957 and 2968-2995; these read STTF…TLSP and ESTP…SLSE. Over residues 2996-3005 the composition is skewed to polar residues; sequence KSTTFYTSPR. Positions 3015–3038 are enriched in low complexity; that stretch reads TTTSSGVSEESSTSHSQPGSTHTT. Repeat unit 16 spans residues 3023 to 3041; sequence EESSTSHSQPGSTHTTAFP. Residues 3040–3094 are compositionally biased toward polar residues; it reads FPDSTTTSGLSQEPTASHSSQGSTEATLSPGSTTASSLGQQSTTFHSSPGDTETT. A compositionally biased stretch (low complexity) spans 3109-3125; that stretch reads STPTHSSTGSLHTTLTP. 2 stretches are compositionally biased toward polar residues: residues 3126-3143 and 3163-3187; these read ASST…FQSW and VSTT…TTLG. The stretch at 3190-3208 is repeat 17; that stretch reads EESTTVHSSPGATGTALFP. Residues 3210-3265 show a composition bias toward polar residues; it reads RSATSVLVGEPTTSPISSGSTETTALPGSTTTAGLSEKSTTFYSSPRSPDTTLSPA. The segment covering 3266-3281 has biased composition (low complexity); it reads STTSSGVSEESTTSHS. Residues 3274–3292 form repeat 18; sequence EESTTSHSRPGSTHTTAFP. Polar residues-rich tracts occupy residues 3282–3354 and 3362–3397; these read RPGS…TTAS and PVHS…NSKD. An N-linked (GlcNAc...) asparagine glycan is attached at N3350. Low complexity-rich tracts occupy residues 3413–3434 and 3446–3463; these read STTS…SSTT and SSPV…STTS. Tandem repeats lie at residues 3439–3457 and 3467–3485. The span at 3468–3482 shows a compositional bias: polar residues; that stretch reads ESTTYHSSPGSTQTM. Residues 3499–3517 are compositionally biased toward low complexity; sequence TSHSSTTHTISSAPSTTSA. Composition is skewed to polar residues over residues 3524–3539 and 3568–3610; these read SYHS…HFPD and RSTT…TTFH. The segment covering 3611-3639 has biased composition (low complexity); the sequence is SSPRSPATTLSPASTTSSGVSEESTTSHS. The stretch at 3632–3650 is repeat 21; that stretch reads EESTTSHSRPGSTHTTAFP. Residues 3640–3661 show a composition bias toward polar residues; the sequence is RPGSTHTTAFPDSTTTPGLSRH. The segment covering 3662-3705 has biased composition (low complexity); the sequence is STTSHSSPGSTDTTLLPASTTTSGSSQESTTSHSSSGSTDTALS. 2 stretches are compositionally biased toward polar residues: residues 3706 to 3741 and 3748 to 3778; these read PGST…TSSG and RVHS…TAFQ. Low complexity predominate over residues 3779–3797; that stretch reads THPASTHTTPSPPSTATAP. Repeat unit 22 spans residues 3799–3817; sequence EESTTYHRSPGSTPTTHFP. Polar residues-rich tracts occupy residues 3800 to 3824 and 3831 to 3847; these read ESTT…TTSG and IFHS…SSAH. Low complexity-rich tracts occupy residues 3848–3860, 3869–3881, and 3889–3902; these read STTS…TTSR, TTLP…PGLS, and SSPR…SPAS. Polar residues-rich tracts occupy residues 3911–3963, 3971–3997, and 4004–4017; these read ESTT…TTTS, TFHS…TEES, and PAST…TLTT. Low complexity-rich tracts occupy residues 4024–4036 and 4051–4078; these read STTF…STGT and ESTP…SLSE. Residues 4079-4088 show a composition bias toward polar residues; the sequence is KSTTFYTSPR. A compositionally biased stretch (low complexity) spans 4098-4121; that stretch reads TTTSSGVSEESSTSHSQPGSTHTT. Residues 4106–4124 form repeat 23; it reads EESSTSHSQPGSTHTTAFP. Polar residues predominate over residues 4123-4177; the sequence is FPDSTTTSGLSQEPTTSHSSQGSTEATLSPGSTTASSLGQQSTTFHSSPGDTETT. A compositionally biased stretch (low complexity) spans 4192-4208; sequence STPTHSSTGSLHTTLTP. Positions 4209–4226 are enriched in polar residues; it reads ASSTSTGLQEESTTFQSW. The segment covering 4227 to 4249 has biased composition (low complexity); it reads PSSSDTTPSPPSTTAVPVEVSTT. Polar residues predominate over residues 4250–4270; sequence YHSRPSSTPTTHFSASSTTLG. Repeat unit 24 spans residues 4273–4291; that stretch reads EESTTVHSSPGATGTALFP. Residues 4293–4348 are compositionally biased toward polar residues; it reads RSATSVLVGEPTTSPISSGSTETTALPGSTTTAGLSEKSTTFYSSPRSPDTTLSPA. Over residues 4349 to 4364 the composition is skewed to low complexity; sequence STTSSGVSEESTTSHS. Composition is skewed to polar residues over residues 4369–4437 and 4445–4480; these read MHTT…TTAS and PVHS…NSKD. N4433 carries an N-linked (GlcNAc...) asparagine glycan. 2 stretches are compositionally biased toward low complexity: residues 4496-4517 and 4529-4546; these read STTS…SSTT and SSPV…STTS. A run of 2 repeats spans residues 4522–4540 and 4550–4568. Residues 4551–4571 show a composition bias toward polar residues; the sequence is ESTTYHSSPGSTQTMHFPESN. An N-linked (GlcNAc...) asparagine glycan is attached at N4571. A compositionally biased stretch (low complexity) spans 4582 to 4600; that stretch reads TSHSSTTHTISSAPSTTSA. Composition is skewed to polar residues over residues 4607-4622 and 4651-4688; these read SYHS…HFPD and RSTT…LSEK. Low complexity-rich tracts occupy residues 4689-4710 and 4722-4739; these read STTF…SSTT and SSPV…STTS. 2 consecutive repeat copies span residues 4715-4733 and 4743-4761. Polar residues predominate over residues 4747-4768; it reads AYHSSPGSTQTMHFPESSTASG. Residues 4776–4792 show a composition bias toward low complexity; sequence SHSSTTHTISSPPSTTS. Composition is skewed to polar residues over residues 4800–4814 and 4887–4917; these read SYHS…THFP and SSRS…SQAE. Over residues 4918 to 4931 the composition is skewed to low complexity; the sequence is STHTTAFPASTTTS. Polar residues-rich tracts occupy residues 4932 to 5024 and 5048 to 5061; these read GLSQ…STPF and STAF…TGTT. Residues 5094–5112 show a composition bias toward low complexity; it reads SSSTSGLTEESTTFHTSPS. In terms of domain architecture, EGF-like spans 5116-5154; sequence TIVSTESLETLAPGLCQEGQIWNGKQCVCPQGYVGYQCL. A disulfide bridge links C5144 with C5153. Positions 5168 to 5275 constitute an SEA domain; the sequence is LNATLGMTVK…TRTTLLDPDS (108 aa). N-linked (GlcNAc...) asparagine glycosylation is found at N5169, N5182, N5197, N5228, and N5264. The Cleavage motif signature appears at 5226-5233; sequence LLNGSIVV. Residues 5381-5401 form a helical membrane-spanning segment; sequence GIVGAVMAVLLLALIILIILF. The Cytoplasmic segment spans residues 5402 to 5478; the sequence is SLSQRKRHRE…QRPEMVASTV (77 aa).

In terms of tissue distribution, ubiquitous, with higher expression in colon. Down-regulated in colorectal cancer as well as in the colon of patients with ulcerative colitis (UC) and Crohn's disease (CD).

The protein localises to the membrane. Involved in epithelial cell protection, adhesion modulation, and signaling. May be involved in epithelial cell growth regulation. Stimulated by both cytokine TNF-alpha and TGF-beta in intestinal epithelium. The polypeptide is Mucin-12 (MUC12) (Homo sapiens (Human)).